Consider the following 561-residue polypeptide: 2-succinyl-5-enolpyruvyl-6-hydroxy-3-cyclohexene-1-carboxylate synthase (561 aa).

It belongs to the TPP enzyme family. MenD subfamily. Homodimer. Mg(2+) serves as cofactor. The cofactor is Mn(2+). Thiamine diphosphate is required as a cofactor.

It catalyses the reaction isochorismate + 2-oxoglutarate + H(+) = 5-enolpyruvoyl-6-hydroxy-2-succinyl-cyclohex-3-ene-1-carboxylate + CO2. It participates in quinol/quinone metabolism; 1,4-dihydroxy-2-naphthoate biosynthesis; 1,4-dihydroxy-2-naphthoate from chorismate: step 2/7. The protein operates within cofactor biosynthesis; phylloquinone biosynthesis. In terms of biological role, catalyzes the thiamine diphosphate-dependent decarboxylation of 2-oxoglutarate and the subsequent addition of the resulting succinic semialdehyde-thiamine pyrophosphate anion to isochorismate to yield 2-succinyl-5-enolpyruvyl-6-hydroxy-3-cyclohexene-1-carboxylate (SEPHCHC). This chain is 2-succinyl-5-enolpyruvyl-6-hydroxy-3-cyclohexene-1-carboxylate synthase, found in Synechococcus sp. (strain CC9605).